Consider the following 312-residue polypeptide: Ribosomal protein uL3 glutamine methyltransferase (312 aa).

It belongs to the protein N5-glutamine methyltransferase family. PrmB subfamily.

The catalysed reaction is L-glutaminyl-[ribosomal protein uL3] + S-adenosyl-L-methionine = N(5)-methyl-L-glutaminyl-[ribosomal protein uL3] + S-adenosyl-L-homocysteine + H(+). Functionally, methylates large ribosomal subunit protein uL3 on a specific glutamine residue. This Xylella fastidiosa (strain 9a5c) protein is Ribosomal protein uL3 glutamine methyltransferase.